The following is a 460-amino-acid chain: 3-isopropylmalate dehydratase large subunit (460 aa).

Residues C338, C398, and C401 each contribute to the [4Fe-4S] cluster site.

The protein belongs to the aconitase/IPM isomerase family. LeuC type 1 subfamily. Heterodimer of LeuC and LeuD. [4Fe-4S] cluster is required as a cofactor.

It catalyses the reaction (2R,3S)-3-isopropylmalate = (2S)-2-isopropylmalate. It functions in the pathway amino-acid biosynthesis; L-leucine biosynthesis; L-leucine from 3-methyl-2-oxobutanoate: step 2/4. Catalyzes the isomerization between 2-isopropylmalate and 3-isopropylmalate, via the formation of 2-isopropylmaleate. The chain is 3-isopropylmalate dehydratase large subunit from Streptococcus thermophilus (strain CNRZ 1066).